The sequence spans 140 residues: 3-hydroxyacyl-[acyl-carrier-protein] dehydratase FabZ (140 aa).

Residue H47 is part of the active site.

Belongs to the thioester dehydratase family. FabZ subfamily.

Its subcellular location is the cytoplasm. It carries out the reaction a (3R)-hydroxyacyl-[ACP] = a (2E)-enoyl-[ACP] + H2O. In terms of biological role, involved in unsaturated fatty acids biosynthesis. Catalyzes the dehydration of short chain beta-hydroxyacyl-ACPs and long chain saturated and unsaturated beta-hydroxyacyl-ACPs. The chain is 3-hydroxyacyl-[acyl-carrier-protein] dehydratase FabZ from Streptococcus agalactiae serotype III (strain NEM316).